A 453-amino-acid polypeptide reads, in one-letter code: MTTDTIVAQATAPGRGGVGIIRISGDLATNVATAIIGHVPKTRYAEYCDFNNADGQVIDQGIALFFKGPNSFTGEDVLELQGHGGQIVLDMLIKRVMEIDGIRIARPGEFSEQAFMNDKLDLTQAEAIADLIDATSEQAAKSALQSLQGEFSKEVHELVDQVTNLRLYVEAAIDFPDEEVDFLSDGKIANALYKIISKLDTVQASAKQGSIIREGMKVVIAGRPNAGKSSLLNALAGKESAIVTEIAGTTRDVLREHIHLDGMPLHIIDTAGLRDTLDTVEQIGIERAWAEIASADRVLFMVDGTTTDAVNPHEIWPDFIDRLPAKLGVTVVRNKADLTGETLDKTEEQGSCVYRISAKTGLGIDELKQHLKSLMGYQSNLEGGFIARRRHLEALELAANHLQLGKEQLEVYLAGELLAEELRMTQMALSEITGKFTSDDLLGKIFGSFCIGK.

The (6S)-5-formyl-5,6,7,8-tetrahydrofolate site is built by Arg-22, Glu-79, and Lys-119. The TrmE-type G domain occupies 215–376; that stretch reads GMKVVIAGRP…LKQHLKSLMG (162 aa). Residue Asn-225 participates in K(+) binding. Residues 225-230, 244-250, 269-272, and 334-337 each bind GTP; these read NAGKSS, TEIAGTT, DTAG, and NKAD. Ser-229 serves as a coordination point for Mg(2+). K(+) contacts are provided by Thr-244, Ile-246, and Thr-249. Thr-250 is a Mg(2+) binding site. Lys-453 is a (6S)-5-formyl-5,6,7,8-tetrahydrofolate binding site.

It belongs to the TRAFAC class TrmE-Era-EngA-EngB-Septin-like GTPase superfamily. TrmE GTPase family. In terms of assembly, homodimer. Heterotetramer of two MnmE and two MnmG subunits. It depends on K(+) as a cofactor.

The protein localises to the cytoplasm. In terms of biological role, exhibits a very high intrinsic GTPase hydrolysis rate. Involved in the addition of a carboxymethylaminomethyl (cmnm) group at the wobble position (U34) of certain tRNAs, forming tRNA-cmnm(5)s(2)U34. The protein is tRNA modification GTPase MnmE of Shewanella frigidimarina (strain NCIMB 400).